A 180-amino-acid polypeptide reads, in one-letter code: NADH-quinone oxidoreductase subunit I (180 aa).

2 4Fe-4S ferredoxin-type domains span residues 48 to 80 (IVLT…LQKS) and 90 to 119 (EFFR…LTPD). Cys60, Cys63, Cys66, Cys70, Cys99, Cys102, Cys105, and Cys109 together coordinate [4Fe-4S] cluster. Positions 161–174 (KPKGDAENEAKPID) are enriched in basic and acidic residues. The tract at residues 161–180 (KPKGDAENEAKPIDVKSLLP) is disordered.

The protein belongs to the complex I 23 kDa subunit family. As to quaternary structure, NDH-1 is composed of 14 different subunits. Subunits NuoA, H, J, K, L, M, N constitute the membrane sector of the complex. It depends on [4Fe-4S] cluster as a cofactor.

It is found in the cell inner membrane. The enzyme catalyses a quinone + NADH + 5 H(+)(in) = a quinol + NAD(+) + 4 H(+)(out). Functionally, NDH-1 shuttles electrons from NADH, via FMN and iron-sulfur (Fe-S) centers, to quinones in the respiratory chain. The immediate electron acceptor for the enzyme in this species is believed to be ubiquinone. Couples the redox reaction to proton translocation (for every two electrons transferred, four hydrogen ions are translocated across the cytoplasmic membrane), and thus conserves the redox energy in a proton gradient. The polypeptide is NADH-quinone oxidoreductase subunit I (Aeromonas hydrophila subsp. hydrophila (strain ATCC 7966 / DSM 30187 / BCRC 13018 / CCUG 14551 / JCM 1027 / KCTC 2358 / NCIMB 9240 / NCTC 8049)).